A 363-amino-acid chain; its full sequence is Protein TAX-1 (363 aa).

The required for localization to the flagellum and for flagellar motility stretch occupies residues 129–363 (RYGNAEEILS…IPFRGVAAEQ (235 aa)). TPR repeat units follow at residues 157–190 (AELH…LSVM) and 199–232 (TFAY…WLKH).

Interacts with TTC29.

Its subcellular location is the cytoplasm. The protein resides in the cytoskeleton. The protein localises to the flagellum axoneme. In terms of biological role, required for flagellum motility. This Trypanosoma brucei brucei (strain 927/4 GUTat10.1) protein is Protein TAX-1.